A 261-amino-acid chain; its full sequence is High-affinity zinc uptake system membrane protein ZnuB (261 aa).

The next 7 helical transmembrane spans lie at 8–28 (ALLT…FVVW), 54–74 (VNPY…MVWL), 84–104 (TLLG…VGLL), 125–145 (TDLI…IYFW), 171–191 (ILMI…GALI), 214–234 (VGWA…LSAF), and 236–256 (DTAA…LSLF).

It belongs to the ABC-3 integral membrane protein family.

The protein localises to the cell inner membrane. Functionally, involved in the high-affinity zinc uptake transport system. The polypeptide is High-affinity zinc uptake system membrane protein ZnuB (znuB) (Haemophilus influenzae (strain ATCC 51907 / DSM 11121 / KW20 / Rd)).